The following is a 53-amino-acid chain: ATP synthase protein 8 (53 aa).

A helical transmembrane segment spans residues 9–29 (WLILFFIFSITLVIFNILNYF).

It belongs to the ATPase protein 8 family. As to quaternary structure, F-type ATPases have 2 components, CF(1) - the catalytic core - and CF(0) - the membrane proton channel.

The protein resides in the mitochondrion membrane. Its function is as follows. Mitochondrial membrane ATP synthase (F(1)F(0) ATP synthase or Complex V) produces ATP from ADP in the presence of a proton gradient across the membrane which is generated by electron transport complexes of the respiratory chain. F-type ATPases consist of two structural domains, F(1) - containing the extramembraneous catalytic core and F(0) - containing the membrane proton channel, linked together by a central stalk and a peripheral stalk. During catalysis, ATP synthesis in the catalytic domain of F(1) is coupled via a rotary mechanism of the central stalk subunits to proton translocation. Part of the complex F(0) domain. Minor subunit located with subunit a in the membrane. The polypeptide is ATP synthase protein 8 (mt:ATPase8) (Anopheles quadrimaculatus (Common malaria mosquito)).